Reading from the N-terminus, the 228-residue chain is Cytochrome b5 domain-containing protein 1 (228 aa).

Positions Arg17–His83 constitute a Cytochrome b5 heme-binding domain. Residue His83 participates in heme binding.

This sequence belongs to the cytochrome b5 family.

It is found in the cytoplasm. Its subcellular location is the cytoskeleton. The protein localises to the cilium axoneme. In terms of biological role, radial spoke stalk protein that binds heme under oxidizing conditions. Required for the coordinated beating of multiple cilia maybe by functioning in a redox signaling pathway. The protein is Cytochrome b5 domain-containing protein 1 (Cyb5d1) of Mus musculus (Mouse).